The sequence spans 326 residues: Probable GTP 3',8-cyclase (326 aa).

The Radical SAM core domain maps to 6-235; it reads LYGRPVLSLR…NRPRYIIRTQ (230 aa). Arg-15 contributes to the GTP binding site. [4Fe-4S] cluster is bound by residues Cys-22, Cys-26, and Cys-29. Lys-62 lines the GTP pocket. Gly-66 contacts S-adenosyl-L-methionine. Thr-92 contributes to the GTP binding site. Position 116 (Ser-116) interacts with S-adenosyl-L-methionine. Lys-153 lines the GTP pocket. 2 residues coordinate [4Fe-4S] cluster: Cys-253 and Cys-256. GTP is bound at residue 258 to 260; the sequence is RLR. Position 270 (Cys-270) interacts with [4Fe-4S] cluster.

Belongs to the radical SAM superfamily. MoaA family. Requires [4Fe-4S] cluster as cofactor.

It catalyses the reaction GTP + AH2 + S-adenosyl-L-methionine = (8S)-3',8-cyclo-7,8-dihydroguanosine 5'-triphosphate + 5'-deoxyadenosine + L-methionine + A + H(+). It functions in the pathway cofactor biosynthesis; molybdopterin biosynthesis. In terms of biological role, catalyzes the cyclization of GTP to (8S)-3',8-cyclo-7,8-dihydroguanosine 5'-triphosphate. The chain is Probable GTP 3',8-cyclase from Thermoplasma volcanium (strain ATCC 51530 / DSM 4299 / JCM 9571 / NBRC 15438 / GSS1).